The chain runs to 197 residues: Segregation and condensation protein B (197 aa).

Belongs to the ScpB family. Homodimer. Homodimerization may be required to stabilize the binding of ScpA to the Smc head domains. Component of a cohesin-like complex composed of ScpA, ScpB and the Smc homodimer, in which ScpA and ScpB bind to the head domain of Smc. The presence of the three proteins is required for the association of the complex with DNA.

The protein resides in the cytoplasm. Its function is as follows. Participates in chromosomal partition during cell division. May act via the formation of a condensin-like complex containing Smc and ScpA that pull DNA away from mid-cell into both cell halves. This is Segregation and condensation protein B from Syntrophotalea carbinolica (strain DSM 2380 / NBRC 103641 / GraBd1) (Pelobacter carbinolicus).